Here is a 115-residue protein sequence, read N- to C-terminus: uncharacterized protein (115 aa).

The next 2 helical transmembrane spans lie at 11 to 31 and 85 to 105; these read FLYL…LVWN and GYII…YALI.

The protein to M.thermoautotrophicum MTH1706.

It is found in the cell membrane. This is an uncharacterized protein from Methanocaldococcus jannaschii (strain ATCC 43067 / DSM 2661 / JAL-1 / JCM 10045 / NBRC 100440) (Methanococcus jannaschii).